A 106-amino-acid chain; its full sequence is uncharacterized protein (106 aa).

This is an uncharacterized protein from Escherichia coli O157:H7.